A 442-amino-acid polypeptide reads, in one-letter code: GTPase HflX (442 aa).

The Hflx-type G domain occupies 186–362; that stretch reads VLVALAGYTN…ALNRVVLKLP (177 aa). GTP is bound by residues 192 to 199, 217 to 221, 238 to 241, 306 to 309, and 341 to 343; these read GYTNAGKS, FTTLD, DTVG, NKID, and SAR. Residues Ser199 and Thr219 each coordinate Mg(2+).

The protein belongs to the TRAFAC class OBG-HflX-like GTPase superfamily. HflX GTPase family. As to quaternary structure, monomer. Associates with the 50S ribosomal subunit. The cofactor is Mg(2+).

The protein localises to the cytoplasm. In terms of biological role, GTPase that associates with the 50S ribosomal subunit and may have a role during protein synthesis or ribosome biogenesis. This chain is GTPase HflX, found in Thermococcus kodakarensis (strain ATCC BAA-918 / JCM 12380 / KOD1) (Pyrococcus kodakaraensis (strain KOD1)).